Here is a 436-residue protein sequence, read N- to C-terminus: Enolase (436 aa).

Gln-167 lines the (2R)-2-phosphoglycerate pocket. Catalysis depends on Glu-209, which acts as the Proton donor. Positions 246, 291, and 318 each coordinate Mg(2+). Residues Lys-343, Arg-372, Ser-373, and Lys-394 each contribute to the (2R)-2-phosphoglycerate site. Catalysis depends on Lys-343, which acts as the Proton acceptor.

This sequence belongs to the enolase family. As to quaternary structure, component of the RNA degradosome, a multiprotein complex involved in RNA processing and mRNA degradation. Mg(2+) is required as a cofactor.

The protein localises to the cytoplasm. It localises to the secreted. The protein resides in the cell surface. It catalyses the reaction (2R)-2-phosphoglycerate = phosphoenolpyruvate + H2O. Its pathway is carbohydrate degradation; glycolysis; pyruvate from D-glyceraldehyde 3-phosphate: step 4/5. Catalyzes the reversible conversion of 2-phosphoglycerate (2-PG) into phosphoenolpyruvate (PEP). It is essential for the degradation of carbohydrates via glycolysis. The protein is Enolase of Glaesserella parasuis serovar 5 (strain SH0165) (Haemophilus parasuis).